Here is a 23-residue protein sequence, read N- to C-terminus: Large ribosomal subunit protein uL10 (23 aa).

This sequence belongs to the universal ribosomal protein uL10 family. As to quaternary structure, part of the ribosomal stalk of the 50S ribosomal subunit. The N-terminus interacts with L11 and the large rRNA to form the base of the stalk. The C-terminus forms an elongated spine to which L12 dimers bind in a sequential fashion forming a multimeric L10(L12)X complex.

Its function is as follows. Forms part of the ribosomal stalk, playing a central role in the interaction of the ribosome with GTP-bound translation factors. This is Large ribosomal subunit protein uL10 (rplJ) from Klebsiella pneumoniae.